The sequence spans 268 residues: MKFAVIGNPISHSLSPVMHRANFNSLGLDDTYEALNIPIEDFHLIKEIISKKELDGFNITIPHKERIIPYLDYVDEQAINAGAVNTVLIKDGKWIGYNTDGIGYVKGLHSVYPDLENAYILILGAGGASKGIAYELAKFLKLKLTVANRTMARFESWNLNINQISLADAENYLAEFDIVINTTPAGMAGNNESIINLKHLSPNTLMSDIIYIPYKTPILEEAERKGNHIYNGLDMFVYQGAESFKIWTNKDADINSMKTAVLQQLKGE.

Residues 13-15 and Thr-60 each bind shikimate; that span reads SLS. Catalysis depends on Lys-64, which acts as the Proton acceptor. Glu-76 is an NADP(+) binding site. Positions 85 and 100 each coordinate shikimate. NADP(+)-binding positions include 124–128, 148–153, and Ile-209; these read GAGGA and NRTMAR. Tyr-211 contacts shikimate. Residue Gly-232 coordinates NADP(+).

This sequence belongs to the shikimate dehydrogenase family. In terms of assembly, homodimer.

It carries out the reaction shikimate + NADP(+) = 3-dehydroshikimate + NADPH + H(+). It participates in metabolic intermediate biosynthesis; chorismate biosynthesis; chorismate from D-erythrose 4-phosphate and phosphoenolpyruvate: step 4/7. Its function is as follows. Involved in the biosynthesis of the chorismate, which leads to the biosynthesis of aromatic amino acids. Catalyzes the reversible NADPH linked reduction of 3-dehydroshikimate (DHSA) to yield shikimate (SA). This is Shikimate dehydrogenase (NADP(+)) from Staphylococcus aureus (strain bovine RF122 / ET3-1).